A 226-amino-acid chain; its full sequence is ATP-dependent dethiobiotin synthetase BioD (226 aa).

14–19 (GIGKTF) contacts ATP. Residue T18 coordinates Mg(2+). K39 is a catalytic residue. Position 43 (S43) interacts with substrate. Residues D56, 117–120 (EGVG), 177–178 (NT), 206–208 (PHI), and N213 each bind ATP. D56 and E117 together coordinate Mg(2+).

The protein belongs to the dethiobiotin synthetase family. As to quaternary structure, homodimer. It depends on Mg(2+) as a cofactor.

It localises to the cytoplasm. It carries out the reaction (7R,8S)-7,8-diammoniononanoate + CO2 + ATP = (4R,5S)-dethiobiotin + ADP + phosphate + 3 H(+). Its pathway is cofactor biosynthesis; biotin biosynthesis; biotin from 7,8-diaminononanoate: step 1/2. Catalyzes a mechanistically unusual reaction, the ATP-dependent insertion of CO2 between the N7 and N8 nitrogen atoms of 7,8-diaminopelargonic acid (DAPA, also called 7,8-diammoniononanoate) to form a ureido ring. This is ATP-dependent dethiobiotin synthetase BioD from Xylella fastidiosa (strain Temecula1 / ATCC 700964).